Reading from the N-terminus, the 486-residue chain is Shugoshin-1 (486 aa).

Positions 71–154 form a coiled coil; sequence IEVSRVELQK…QNRAKILEKK (84 aa). 6 disordered regions span residues 137 to 163, 187 to 209, 222 to 251, 323 to 346, 382 to 403, and 418 to 467; these read MSKTSNNQQNRAKILEKKTRSSKCAPT, YTSCHEPPQDKTNKRCTNRRKSE, HSCRPHVEYNGSSHDDDPRKTRRRRSARLN, AGSSVAGGEAHKFDIEDPEPPRKS, PIQHEQKRKLSRRKSSRLDPGP, and TVAP…SRRA. The span at 331-346 shows a compositional bias: basic and acidic residues; that stretch reads EAHKFDIEDPEPPRKS. Over residues 387 to 396 the composition is skewed to basic residues; sequence QKRKLSRRKS. Over residues 423-433 the composition is skewed to polar residues; the sequence is APSSSNALIEQ.

Belongs to the shugoshin family. In terms of tissue distribution, highly expressed in roots. Expressed in panicles. Expressed at low levels in leaves.

The protein resides in the nucleus. Its subcellular location is the nucleolus. It localises to the chromosome. It is found in the centromere. Plays a central role in chromosome cohesion during meiosis I by preventing premature dissociation of cohesin complex from centromeres after prophase, when most of cohesin complex dissociates from chromosomes arms. Required for the timely assembly and maintenance of synaptonemal complex (SC) during early prophase I. Required for maintenance of centromeric cohesion before prophase II and correct segregation of chromatids during meiosis II. Has apparently no function in mitosis. The polypeptide is Shugoshin-1 (Oryza sativa subsp. japonica (Rice)).